Reading from the N-terminus, the 242-residue chain is Uridylate kinase (242 aa).

16–19 (KVSG) contributes to the ATP binding site. G58 contacts UMP. Residues G59 and R63 each coordinate ATP. Residues D78 and 139-146 (TGNPFCTT) contribute to the UMP site. ATP contacts are provided by T166, Q167, Y172, and D175.

This sequence belongs to the UMP kinase family. Homohexamer.

The protein resides in the cytoplasm. The catalysed reaction is UMP + ATP = UDP + ADP. The protein operates within pyrimidine metabolism; CTP biosynthesis via de novo pathway; UDP from UMP (UMPK route): step 1/1. Its activity is regulated as follows. Inhibited by UTP. Catalyzes the reversible phosphorylation of UMP to UDP. In Rickettsia massiliae (strain Mtu5), this protein is Uridylate kinase.